The sequence spans 569 residues: MLO-like protein 10 (569 aa).

Residues 1-41 are Extracellular-facing; that stretch reads MATRCFWCWTTLLFCSQLLTGFARASSAGGAKEKGLSQTPT. A helical membrane pass occupies residues 42 to 62; it reads WAVALVCTFFILVSVLLEKAL. Residues 63–85 are Cytoplasmic-facing; that stretch reads HRVATWLWEKHKNSLLEALEKIK. Residues 86 to 106 traverse the membrane as a helical segment; that stretch reads AELMILGFISLLLTFGEQYIL. Over 107-163 the chain is Extracellular; it reads KICIPEKAAASMLPCPAPSTHDQDKTHRRRLAAATTSSRCDEGHEPLIPATGLHQLH. Residues 164-184 form a helical membrane-spanning segment; it reads ILLFFMAAFHILYSFITMMLG. At 185-286 the chain is on the cytoplasmic side; the sequence is RLKIRGWKKW…IKRSLEDDFK (102 aa). A helical transmembrane segment spans residues 287-307; the sequence is VVVGISPLLWASFVIFLLLNV. Asparagine 308 is a topological domain (extracellular). A helical transmembrane segment spans residues 309–329; it reads GWEALFWASILPVLIILAVST. Residues 330-372 are Cytoplasmic-facing; it reads KLQAILTRMALGITERHAVVQGIPLVHGSDKYFWFNRPQLLLH. The helical transmembrane segment at 373–393 threads the bilayer; it reads LLHFALFQNAFQLTYFFWVWY. The Extracellular segment spans residues 394-413; sequence SFGLKSCFHTDFKLVIVKLS. Residues 414 to 434 traverse the membrane as a helical segment; the sequence is LGVGALILCSYITLPLYALVT. The Cytoplasmic portion of the chain corresponds to 435-569; it reads QMGSNMKKAV…VKNVPANDID (135 aa). The calmodulin-binding stretch occupies residues 447–468; the sequence is EQMAKALKKWHMTVKKKKGKAR.

This sequence belongs to the MLO family.

It localises to the membrane. May be involved in modulation of pathogen defense and leaf cell death. Activity seems to be regulated by Ca(2+)-dependent calmodulin binding and seems not to require heterotrimeric G proteins. The protein is MLO-like protein 10 (MLO10) of Arabidopsis thaliana (Mouse-ear cress).